Reading from the N-terminus, the 480-residue chain is MKVLSVSSEVFPLIKTGGLADVSGALPIALKAFGVETKTLLPGYPAVMKVIRDPVVRLEFPDLLGERATVLEVDHEGLDLLVLDAPAYYDRPGGPYLDPLGKDYPDNWRRFAALSLAASEIGAGLLPGWRPDLVHTHDWQAALTSVYMRYYPTPELPSVLTIHNIAFQGQFGSEIFPGLRLPDHAFAIDGVEYYGTTGFLKGGLQTAHAITTVSPTYADEILTPEFGMGLEGVIATRIDDLHGIVNGIDTDVWNPATDPVVHTHYGPTTLKNREENRRSIAEFFHLDNDDAPIFCVISRLTWQKGMDIVANVADRIVAMGGKLVVLGSGEAALEGALLASASRNPGRIGVSIGYNEPMSHLMQAGCDAIIIPSRFEPCGLTQLYALRYGCVPIVARTGGLNDTVIDANHAALAAKVATGIQFSPVTETGMLQAIRRAMHFYADRKLWTQLQKQGMKSDVSWEKSAERYAALYSSLVSKGM.

This sequence belongs to the glycosyltransferase 1 family. Bacterial/plant glycogen synthase subfamily.

The enzyme catalyses [(1-&gt;4)-alpha-D-glucosyl](n) + ADP-alpha-D-glucose = [(1-&gt;4)-alpha-D-glucosyl](n+1) + ADP + H(+). Its pathway is glycan biosynthesis; glycogen biosynthesis. Synthesizes alpha-1,4-glucan chains using ADP-glucose. This is Glycogen synthase from Rhizobium etli (strain ATCC 51251 / DSM 11541 / JCM 21823 / NBRC 15573 / CFN 42).